Consider the following 531-residue polypeptide: CTP synthase (531 aa).

Residues 1–267 (MTKYIFVTGG…DQIVCEHLRL (267 aa)) are amidoligase domain. Ser-13 serves as a coordination point for CTP. Ser-13 contributes to the UTP binding site. Residue 14–19 (SLGKGI) coordinates ATP. Tyr-54 lines the L-glutamine pocket. Asp-71 provides a ligand contact to ATP. Mg(2+) is bound by residues Asp-71 and Glu-141. Residues 148-150 (DIE), 188-193 (KTKPTQ), and Lys-224 each bind CTP. UTP-binding positions include 188–193 (KTKPTQ) and Lys-224. 240 to 242 (RDA) contributes to the ATP binding site. Positions 292 to 531 (KIALVGKYVE…REFVRASLKE (240 aa)) constitute a Glutamine amidotransferase type-1 domain. Gly-354 contacts L-glutamine. The active-site Nucleophile; for glutamine hydrolysis is the Cys-381. L-glutamine-binding positions include 382–385 (LGMQ), Glu-405, and Arg-462. Residues His-507 and Glu-509 contribute to the active site.

It belongs to the CTP synthase family. In terms of assembly, homotetramer.

The catalysed reaction is UTP + L-glutamine + ATP + H2O = CTP + L-glutamate + ADP + phosphate + 2 H(+). It carries out the reaction L-glutamine + H2O = L-glutamate + NH4(+). The enzyme catalyses UTP + NH4(+) + ATP = CTP + ADP + phosphate + 2 H(+). It participates in pyrimidine metabolism; CTP biosynthesis via de novo pathway; CTP from UDP: step 2/2. Allosterically activated by GTP, when glutamine is the substrate; GTP has no effect on the reaction when ammonia is the substrate. The allosteric effector GTP functions by stabilizing the protein conformation that binds the tetrahedral intermediate(s) formed during glutamine hydrolysis. Inhibited by the product CTP, via allosteric rather than competitive inhibition. Catalyzes the ATP-dependent amination of UTP to CTP with either L-glutamine or ammonia as the source of nitrogen. Regulates intracellular CTP levels through interactions with the four ribonucleotide triphosphates. This chain is CTP synthase, found in Geobacillus kaustophilus (strain HTA426).